The primary structure comprises 377 residues: MSTFLISCGGTGGHLSPGIALAEGLQARGHSVRLLISHKKVDARLIAKYPRLDFTRVPGTGFSLHPVRLARFIGTQSRGLWFCRGLVRAARPAGVVAFGGFTSAGVVLAARWRGVPVALHEANRVPGRAIRVLSRFANRVYLPPGVRLASAPPGAVRPMGLPVRQEIRRVSQTDARARFGFAVGQKLLVVFGGSQGATVLNDWVRREMPALAAEGVQVCCVTGLGKGSDETVELRTHAGQPVRIQFLTFCDCVPELLSAADLVLSRAGAGTIAELVRCETPAILVPFPQAADDHQRANAAFFERQGGGVVVEQTMMHSVRAEVLDVIFDEELLRKFRGNLQRMDRANSLELMLNDLEEMTRTHGASGSPGTATAVVT.

UDP-N-acetyl-alpha-D-glucosamine-binding positions include 11–13, Asn-123, Arg-164, Ser-194, and Gln-295; that span reads TGG.

Belongs to the glycosyltransferase 28 family. MurG subfamily.

The protein localises to the cell inner membrane. It catalyses the reaction di-trans,octa-cis-undecaprenyl diphospho-N-acetyl-alpha-D-muramoyl-L-alanyl-D-glutamyl-meso-2,6-diaminopimeloyl-D-alanyl-D-alanine + UDP-N-acetyl-alpha-D-glucosamine = di-trans,octa-cis-undecaprenyl diphospho-[N-acetyl-alpha-D-glucosaminyl-(1-&gt;4)]-N-acetyl-alpha-D-muramoyl-L-alanyl-D-glutamyl-meso-2,6-diaminopimeloyl-D-alanyl-D-alanine + UDP + H(+). It participates in cell wall biogenesis; peptidoglycan biosynthesis. Cell wall formation. Catalyzes the transfer of a GlcNAc subunit on undecaprenyl-pyrophosphoryl-MurNAc-pentapeptide (lipid intermediate I) to form undecaprenyl-pyrophosphoryl-MurNAc-(pentapeptide)GlcNAc (lipid intermediate II). The polypeptide is UDP-N-acetylglucosamine--N-acetylmuramyl-(pentapeptide) pyrophosphoryl-undecaprenol N-acetylglucosamine transferase (Opitutus terrae (strain DSM 11246 / JCM 15787 / PB90-1)).